The following is a 990-amino-acid chain: Protein SUPPRESSOR OF MAX2 1 (990 aa).

The Clp R domain occupies 8–167 (IQQTLTPEAA…KATIEQSLNN (160 aa)). 2 repeat regions span residues 12–83 (LTPE…LERL) and 96–167 (ISNA…SLNN). The interval 818 to 855 (PKKEHGSGLSFDLNQAADTDDGSHNTSDLTTDNDQDEQ) is disordered. Positions 828-832 (FDLNQ) match the EAR motif.

This sequence belongs to the ClpA/ClpB family. Interacts probably with TPL/TPR in an EAR-motif dependent manner. Interacts with TPL, TPR1, TPR2 and TPR4. Highly expressed in dry seeds. Expressed in seedlings, rosette leaves and senescing leaves. Detected in roots and axillary shoots. Expressed in the primary rosette buds and expanding leaves of adult rosettes, the vasculature of the hypocotyls, cotyledons, and mature roots, in the midvein and petioles of young leaves, the young leaf periphery, stomata, and the root caps.

Probable component of a transcriptional corepressor complex that acts downstream of MAX2 to negatively regulate karrikins/strigolactone responses. Probable target of MAX2 during germination and seedling photomorphogenesis. Acts probably specifically in the karrikin pathway. This is Protein SUPPRESSOR OF MAX2 1 from Arabidopsis thaliana (Mouse-ear cress).